Consider the following 122-residue polypeptide: Small ribosomal subunit protein uS13 (122 aa).

The disordered stretch occupies residues P97–K122. Over residues Q101–K122 the composition is skewed to basic residues.

It belongs to the universal ribosomal protein uS13 family. In terms of assembly, part of the 30S ribosomal subunit. Forms a loose heterodimer with protein S19. Forms two bridges to the 50S subunit in the 70S ribosome.

In terms of biological role, located at the top of the head of the 30S subunit, it contacts several helices of the 16S rRNA. In the 70S ribosome it contacts the 23S rRNA (bridge B1a) and protein L5 of the 50S subunit (bridge B1b), connecting the 2 subunits; these bridges are implicated in subunit movement. Contacts the tRNAs in the A and P-sites. The polypeptide is Small ribosomal subunit protein uS13 (Caldanaerobacter subterraneus subsp. tengcongensis (strain DSM 15242 / JCM 11007 / NBRC 100824 / MB4) (Thermoanaerobacter tengcongensis)).